Reading from the N-terminus, the 329-residue chain is NADH-quinone oxidoreductase subunit H 2 (329 aa).

8 helical membrane passes run 12–32, 78–98, 120–140, 159–179, 191–211, 242–262, 270–290, and 309–329; these read GAKIALIFFVVLTLAAYLVFA, WLFYLAPAMAAVPAILTFAVI, VGLLFFLALSSIAVYGVALGG, LISYELSMGLSLVPTVMLAGS, GVWFIAYQPVAFLIFLISIAA, LFFVGEYINIIVLGGLATTFF, LLPPFVWFSVKTLAFAFFFIW, and KVLTPLALLNILITGWVLMFV.

It belongs to the complex I subunit 1 family. NDH-1 is composed of 14 different subunits. Subunits NuoA, H, J, K, L, M, N constitute the membrane sector of the complex.

It localises to the cell inner membrane. The enzyme catalyses a quinone + NADH + 5 H(+)(in) = a quinol + NAD(+) + 4 H(+)(out). Functionally, NDH-1 shuttles electrons from NADH, via FMN and iron-sulfur (Fe-S) centers, to quinones in the respiratory chain. The immediate electron acceptor for the enzyme in this species is believed to be ubiquinone. Couples the redox reaction to proton translocation (for every two electrons transferred, four hydrogen ions are translocated across the cytoplasmic membrane), and thus conserves the redox energy in a proton gradient. This subunit may bind ubiquinone. The sequence is that of NADH-quinone oxidoreductase subunit H 2 from Geobacter sulfurreducens (strain ATCC 51573 / DSM 12127 / PCA).